Here is a 302-residue protein sequence, read N- to C-terminus: NADH-cytochrome b5 reductase 2 (302 aa).

Positions 1 to 41 (MFSRLSRSHSKALPIALGTVAIAAATAFYFANRNQHSFVFN) are cleaved as a propeptide — removed in mature form. A helical transmembrane segment spans residues 12–32 (ALPIALGTVAIAAATAFYFAN). The region spanning 51-155 (DKWIDLPISK…KGPIMKWKWQ (105 aa)) is the FAD-binding FR-type domain. 158-193 (QFKSITLLGAGTGINPLYQLAHHIVENPNDKTKVNL) contacts FAD. Position 278 is a phosphoserine (serine 278).

The protein belongs to the flavoprotein pyridine nucleotide cytochrome reductase family. The cofactor is FAD. In terms of processing, there are two isoforms of NADH-cytochrome b5 reductase, a 34 kDa form (p34) and a 32 kDa form (p32). The p34 form becomes firmly anchored to the outer mitochondrial membrane after an incomplete translocation arrest. The p32 form is formed after translocation of the p34 precursor to the inner mitochondrial membrane, where it is processed by mitochondrial inner membrane peptidase (IMP) complex and released to the intermembrane space.

The protein resides in the mitochondrion intermembrane space. It localises to the mitochondrion outer membrane. The catalysed reaction is 2 Fe(III)-[cytochrome b5] + NADH = 2 Fe(II)-[cytochrome b5] + NAD(+) + H(+). In terms of biological role, the outer membrane form may mediate the reduction of outer membrane cytochrome b5, and the soluble inter-membrane space form may transfer electrons from external NADH to cytochrome c, thereby mediating an antimycin-insensitive, energy-coupled oxidation of external NADH by yeast mitochondria. Involved in the reduction of D-erythroascorbyl free radicals. This chain is NADH-cytochrome b5 reductase 2 (MCR1), found in Saccharomyces cerevisiae (strain YJM789) (Baker's yeast).